The sequence spans 48 residues: Palustrin-3a (48 aa).

Cys-43 and Cys-48 are joined by a disulfide.

In terms of tissue distribution, expressed by the skin glands.

It localises to the secreted. In terms of biological role, antimicrobial activity against Gram-negative bacterium E.coli. This Lithobates palustris (Pickerel frog) protein is Palustrin-3a.